We begin with the raw amino-acid sequence, 1500 residues long: Carbamoyl-phosphate synthase [ammonia], mitochondrial (1500 aa).

The transit peptide at 1 to 38 (MTRILTAFKVVRTLKTGFGFTNVTAHQKWKFSRPGIRL) directs the protein to the mitochondrion. Residues 39 to 218 (LSVKAQTAHI…VKVYGKGNPT (180 aa)) form an anthranilate phosphoribosyltransferase homolog region. K55, K57, and K119 each carry N6-acetyllysine; alternate. K55 bears the N6-glutaryllysine; alternate mark. An N6-succinyllysine; alternate mark is found at K55, K57, and K119. S148 is subject to Phosphoserine. Residues K157 and K171 each carry the N6-acetyllysine; alternate modification. An N6-succinyllysine; alternate modification is found at K157. K171 is modified (N6-glutaryllysine; alternate). An N6-glutaryllysine modification is found at K176. K182 and K197 each carry N6-acetyllysine. 5 positions are modified to N6-acetyllysine; alternate: K207, K210, K214, K219, and K228. An N6-glutaryllysine; alternate mark is found at K207, K210, K214, K219, and K228. K207 carries the N6-succinyllysine; alternate modification. K214 is modified (N6-succinyllysine; alternate). The region spanning 219–404 (KVVAVDCGIK…FSLIKKGKAT (186 aa)) is the Glutamine amidotransferase type-1 domain. K237 carries the N6-glutaryllysine modification. Residues K280, K287, K307, and K310 each carry the N6-acetyllysine; alternate modification. At K280 the chain carries N6-glutaryllysine; alternate. N6-succinyllysine; alternate occurs at positions 287 and 307. N6-glutaryllysine; alternate is present on residues K307 and K310. K400 is modified (N6-succinyllysine). Residues K402, K412, K453, and K458 each carry the N6-glutaryllysine; alternate modification. N6-succinyllysine; alternate occurs at positions 402 and 412. N6-acetyllysine; alternate occurs at positions 412, 453, 458, 522, 527, and 532. N6-succinyllysine; alternate is present on residues K458, K522, and K527. K527 and K532 each carry N6-glutaryllysine; alternate. The residue at position 537 (S537) is a Phosphoserine; alternate. S537 carries an O-linked (GlcNAc) serine; alternate glycan. The residue at position 540 (S540) is a Phosphoserine. The ATP-grasp 1 domain maps to 551–743 (SDKLNEINEK…LAFIAAKIAL (193 aa)). N6-acetyllysine; alternate is present on residues K553 and K560. N6-glutaryllysine; alternate is present on K553. An N6-succinyllysine; alternate mark is found at K553 and K560. Position 569 is a phosphoserine (S569). Residues K575 and K612 each carry the N6-acetyllysine; alternate modification. Residues K575 and K612 each carry the N6-succinyllysine; alternate modification. Position 630 is an N6-acetyllysine (K630). K728 is modified (N6-glutaryllysine). An N6-acetyllysine; alternate mark is found at K751, K757, K772, K793, K811, and K831. N6-succinyllysine; alternate occurs at positions 751 and 757. 4 positions are modified to N6-glutaryllysine; alternate: K757, K772, K793, and K811. K793 is subject to N6-succinyllysine; alternate. N6-succinyllysine; alternate is present on K831. Phosphoserine is present on S835. An N6-acetyllysine; alternate mark is found at K841 and K856. K841 and K856 each carry N6-glutaryllysine; alternate. K869 carries the N6-glutaryllysine modification. 3 positions are modified to N6-acetyllysine; alternate: K875, K889, and K892. K875, K889, and K892 each carry N6-glutaryllysine; alternate. An N6-succinyllysine; alternate mark is found at K875, K889, and K892. 2 positions are modified to phosphoserine: S896 and S898. The residue at position 905 (K905) is an N6-glutaryllysine. N6-acetyllysine; alternate is present on residues K908, K915, and K919. 3 positions are modified to N6-glutaryllysine; alternate: K908, K915, and K919. N6-succinyllysine; alternate is present on residues K915 and K919. Position 935 is an N6-acetyllysine (K935). S1036 carries the phosphoserine modification. Residue K1074 is modified to N6-acetyllysine; alternate. An N6-glutaryllysine; alternate modification is found at K1074. N6-succinyllysine; alternate is present on K1074. A phosphoserine mark is found at S1079, S1090, and S1093. An ATP-grasp 2 domain is found at 1093–1284 (SAVLDELKVA…FIDVATKVMI (192 aa)). K1100 bears the N6-acetyllysine; alternate mark. K1100 bears the N6-succinyllysine; alternate mark. K1149 carries the post-translational modification N6-succinyllysine. K1150 carries the post-translational modification N6-glutaryllysine. K1168 and K1183 each carry N6-acetyllysine; alternate. Residues K1168 and K1183 each carry the N6-glutaryllysine; alternate modification. An N6-succinyllysine; alternate mark is found at K1168 and K1183. S1203 is subject to Phosphoserine. Residue K1222 is modified to N6-acetyllysine. The residue at position 1224 (K1224) is an N6-glutaryllysine. K1232, K1269, and K1291 each carry N6-acetyllysine; alternate. 3 positions are modified to N6-succinyllysine; alternate: K1232, K1269, and K1291. S1331 carries O-linked (GlcNAc) serine glycosylation. An O-linked (GlcNAc) threonine glycan is attached at T1332. The MGS-like domain occupies 1355–1500 (FKIPQKGILI…YRQYSAGKAA (146 aa)). Position 1356 is an N6-acetyllysine; alternate (K1356). N6-glutaryllysine; alternate is present on residues K1356 and K1360. N6-succinyllysine; alternate occurs at positions 1356 and 1360. Positions 1391, 1394, and 1410 each coordinate N-acetyl-L-glutamate. Residues S1419 and S1431 each carry the phosphoserine modification. Residues N1437 and N1440 each coordinate N-acetyl-L-glutamate. Position 1444 is an N6-acetyllysine; alternate (K1444). Residue K1444 is modified to N6-succinyllysine; alternate. N-acetyl-L-glutamate is bound at residue N1449. K1471, K1479, and K1486 each carry N6-acetyllysine; alternate. N6-succinyllysine; alternate is present on residues K1471, K1479, and K1486. N6-glutaryllysine; alternate occurs at positions 1479 and 1486.

As to quaternary structure, can form homooligomers (monomers as predominant form and dimers). In terms of processing, undergoes proteolytic cleavage in the C-terminal region corresponding to the loss of approximately 12 AA residues from the C-terminus. Post-translationally, succinylated at Lys-287 and Lys-1291. Desuccinylated at Lys-1291 by SIRT5, leading to activation. Glutarylated. Glutarylation levels increase during fasting. Deglutarylated by SIRT5 at Lys-55, Lys-219, Lys-412, Lys-889, Lys-892, Lys-915, Lys-1360 and Lys-1486, leading to activation. In terms of tissue distribution, primarily in the liver and small intestine.

It localises to the mitochondrion. Its subcellular location is the nucleus. The protein localises to the nucleolus. It is found in the cell membrane. It catalyses the reaction hydrogencarbonate + NH4(+) + 2 ATP = carbamoyl phosphate + 2 ADP + phosphate + 2 H(+). Its activity is regulated as follows. Requires N-acetyl-L-glutamate (NAG) as an allosteric activator. Activated by glycerol in the absence of NAG, whereas in the presence of NAG it is inhibited by increasing concentrations of glycerol. Involved in the urea cycle of ureotelic animals where the enzyme plays an important role in removing excess ammonia from the cell. In Homo sapiens (Human), this protein is Carbamoyl-phosphate synthase [ammonia], mitochondrial (CPS1).